Reading from the N-terminus, the 256-residue chain is MNNIWWQTKGQGNVHLVLLHGWGLNAEVWRCIDEELSSHFTLHLVDLPGFGRSRGFGALSLADMAEVVLRQAPDKAIWLGWSLGGLVASQIALTHPERVLALVTVASSPCFSARDEWPGIKPDVLAGFQQQLSDDFQRTVERFLALQTMGTETARQDARALKKTVLALPMPEVDVLNGGLEILKTVDLRLPLQNVSMPFLRLYGYLDGLVPRKVVPMLDKLWPHSESYIFAKAAHAPFISHPVEFHHLLVALKQRV.

One can recognise an AB hydrolase-1 domain in the interval 15–242 (HLVLLHGWGL…AAHAPFISHP (228 aa)). Residues W22, 82 to 83 (SL), and 143 to 147 (FLALQ) each bind substrate. The active-site Nucleophile is the S82. Active-site residues include D207 and H235. Residue H235 coordinates substrate.

It belongs to the AB hydrolase superfamily. Carboxylesterase BioH family. As to quaternary structure, monomer.

The protein localises to the cytoplasm. The catalysed reaction is 6-carboxyhexanoyl-[ACP] methyl ester + H2O = 6-carboxyhexanoyl-[ACP] + methanol + H(+). It participates in cofactor biosynthesis; biotin biosynthesis. The physiological role of BioH is to remove the methyl group introduced by BioC when the pimeloyl moiety is complete. It allows to synthesize pimeloyl-ACP via the fatty acid synthetic pathway through the hydrolysis of the ester bonds of pimeloyl-ACP esters. This chain is Pimeloyl-[acyl-carrier protein] methyl ester esterase, found in Escherichia coli O6:K15:H31 (strain 536 / UPEC).